The sequence spans 279 residues: Protein COP1 SUPPRESSOR 2 (279 aa).

2 disordered regions span residues 1 to 29 (MPPK…ISEE) and 57 to 79 (SSTA…EGEK). The segment covering 68 to 79 (KPVEKTETEGEK) has biased composition (basic and acidic residues). A coiled-coil region spans residues 86-183 (DTFAQETAVL…EETEAAKKLL (98 aa)). Positions 217–229 (LRREHPELYKDRG) are enriched in basic and acidic residues. The disordered stretch occupies residues 217–279 (LRREHPELYK…KRERNRVMRR (63 aa)). The span at 250-260 (ADSGKSRQAAT) shows a compositional bias: polar residues. Over residues 270–279 (KRERNRVMRR) the composition is skewed to basic residues.

The protein belongs to the TLS1 family. In terms of assembly, interacts with COP1.

The protein localises to the nucleus. It is found in the nucleus speckle. In terms of biological role, inhibits E3 ubiquitin-protein ligase activity of COP1, a central repressor of seedling photomorphogenesis. Represses COP1-mediated turnover of HY5 in the dark. Required for primary root development under normal light growth conditions. This Arabidopsis thaliana (Mouse-ear cress) protein is Protein COP1 SUPPRESSOR 2.